A 327-amino-acid polypeptide reads, in one-letter code: tRNA uridine(34) hydroxylase (327 aa).

The 97-residue stretch at 122 to 218 folds into the Rhodanese domain; sequence QENRCLVLDV…YGLKMGTGKW (97 aa). C178 functions as the Cysteine persulfide intermediate in the catalytic mechanism.

The protein belongs to the TrhO family.

The enzyme catalyses uridine(34) in tRNA + AH2 + O2 = 5-hydroxyuridine(34) in tRNA + A + H2O. Catalyzes oxygen-dependent 5-hydroxyuridine (ho5U) modification at position 34 in tRNAs. This Chlamydia trachomatis serovar A (strain ATCC VR-571B / DSM 19440 / HAR-13) protein is tRNA uridine(34) hydroxylase.